The following is a 481-amino-acid chain: Protein nucleotidyltransferase YdiU (481 aa).

ATP contacts are provided by Gly85, Gly87, Arg88, Lys108, Asp120, Gly121, Arg171, and Arg178. The active-site Proton acceptor is Asp248. The Mg(2+) site is built by Asn249 and Asp258. Asp258 contacts ATP. The interval His458–Ser481 is disordered.

Belongs to the SELO family. Mg(2+) is required as a cofactor. The cofactor is Mn(2+).

It carries out the reaction L-seryl-[protein] + ATP = 3-O-(5'-adenylyl)-L-seryl-[protein] + diphosphate. The enzyme catalyses L-threonyl-[protein] + ATP = 3-O-(5'-adenylyl)-L-threonyl-[protein] + diphosphate. It catalyses the reaction L-tyrosyl-[protein] + ATP = O-(5'-adenylyl)-L-tyrosyl-[protein] + diphosphate. The catalysed reaction is L-histidyl-[protein] + UTP = N(tele)-(5'-uridylyl)-L-histidyl-[protein] + diphosphate. It carries out the reaction L-seryl-[protein] + UTP = O-(5'-uridylyl)-L-seryl-[protein] + diphosphate. The enzyme catalyses L-tyrosyl-[protein] + UTP = O-(5'-uridylyl)-L-tyrosyl-[protein] + diphosphate. Nucleotidyltransferase involved in the post-translational modification of proteins. It can catalyze the addition of adenosine monophosphate (AMP) or uridine monophosphate (UMP) to a protein, resulting in modifications known as AMPylation and UMPylation. The protein is Protein nucleotidyltransferase YdiU of Hydrogenovibrio crunogenus (strain DSM 25203 / XCL-2) (Thiomicrospira crunogena).